The following is a 432-amino-acid chain: 23S rRNA (uracil(1939)-C(5))-methyltransferase RlmD (432 aa).

The TRAM domain maps to 1 to 54; the sequence is MNPVVDILSLDHEGHGVARLDGKVTFVDGALAGERAEIAIFRKHAKYNSANAVA. [4Fe-4S] cluster is bound by residues Cys-67, Cys-73, Cys-76, and Cys-155. 6 residues coordinate S-adenosyl-L-methionine: Gln-264, Phe-293, Asn-298, Glu-314, Asn-341, and Asp-362. Catalysis depends on Cys-389, which acts as the Nucleophile.

Belongs to the class I-like SAM-binding methyltransferase superfamily. RNA M5U methyltransferase family. RlmD subfamily.

It catalyses the reaction uridine(1939) in 23S rRNA + S-adenosyl-L-methionine = 5-methyluridine(1939) in 23S rRNA + S-adenosyl-L-homocysteine + H(+). In terms of biological role, catalyzes the formation of 5-methyl-uridine at position 1939 (m5U1939) in 23S rRNA. The sequence is that of 23S rRNA (uracil(1939)-C(5))-methyltransferase RlmD from Thiobacillus denitrificans (strain ATCC 25259 / T1).